Reading from the N-terminus, the 209-residue chain is Chaperone protein TorD (209 aa).

It belongs to the TorD/DmsD family. TorD subfamily.

It is found in the cytoplasm. Its function is as follows. Involved in the biogenesis of TorA. Acts on TorA before the insertion of the molybdenum cofactor and, as a result, probably favors a conformation of the apoenzyme that is competent for acquiring the cofactor. The polypeptide is Chaperone protein TorD (Shewanella sp. (strain MR-4)).